The following is a 489-amino-acid chain: Fumarate reductase (CoM/CoB) subunit B (489 aa).

In terms of domain architecture, 2Fe-2S ferredoxin-type spans 2–89; it reads INVKVLRFEP…GAVIEPVDLP (88 aa). Positions 53, 58, 61, and 73 each coordinate [2Fe-2S] cluster. 4Fe-4S ferredoxin-type domains follow at residues 124-158 and 178-209; these read PEDY…YAGP and AAGG…PGDA. Residues C136, C139, C142, C146, C189, C192, C195, and C199 each coordinate [4Fe-4S] cluster.

Subunit B of the heterodimeric fumarate reductase of methanogenic Archaea, composed of subunits A (TfrA) and B (TfrB). It depends on [2Fe-2S] cluster as a cofactor. The cofactor is [4Fe-4S] cluster.

Its subcellular location is the cytoplasm. The catalysed reaction is coenzyme B + coenzyme M + fumarate = coenzyme M-coenzyme B heterodisulfide + succinate. In terms of biological role, catalyzes the reduction of fumarate with reduced coenzyme M (CoM-S-H) and coenzyme B (CoB-S-H). In vitro, is able to reduces fumarate with reduced benzyl viologen, oxidize CoM-S-H and CoB-S-H to CoM-S-S-CoB with methylene blue, and reduce CoM-S-S-CoB with reduced benzyl viologen. The enzyme has specificity for the two thiol compounds as the CoB--CoM heterodisulfide reductase. The enzyme is very sensitive to oxygen. This is Fumarate reductase (CoM/CoB) subunit B from Methanothermobacter marburgensis (strain ATCC BAA-927 / DSM 2133 / JCM 14651 / NBRC 100331 / OCM 82 / Marburg) (Methanobacterium thermoautotrophicum).